The primary structure comprises 230 residues: N-(5'-phosphoribosyl)anthranilate isomerase (230 aa).

This sequence belongs to the TrpF family.

The catalysed reaction is N-(5-phospho-beta-D-ribosyl)anthranilate = 1-(2-carboxyphenylamino)-1-deoxy-D-ribulose 5-phosphate. It participates in amino-acid biosynthesis; L-tryptophan biosynthesis; L-tryptophan from chorismate: step 3/5. This chain is N-(5'-phosphoribosyl)anthranilate isomerase, found in Thermosynechococcus vestitus (strain NIES-2133 / IAM M-273 / BP-1).